We begin with the raw amino-acid sequence, 453 residues long: ATP-dependent protease ATPase subunit HslU (453 aa).

Residues isoleucine 18, 60–65 (GVGKTE), aspartate 266, glutamate 331, and arginine 403 each bind ATP.

This sequence belongs to the ClpX chaperone family. HslU subfamily. A double ring-shaped homohexamer of HslV is capped on each side by a ring-shaped HslU homohexamer. The assembly of the HslU/HslV complex is dependent on binding of ATP.

The protein localises to the cytoplasm. ATPase subunit of a proteasome-like degradation complex; this subunit has chaperone activity. The binding of ATP and its subsequent hydrolysis by HslU are essential for unfolding of protein substrates subsequently hydrolyzed by HslV. HslU recognizes the N-terminal part of its protein substrates and unfolds these before they are guided to HslV for hydrolysis. The sequence is that of ATP-dependent protease ATPase subunit HslU from Desulforapulum autotrophicum (strain ATCC 43914 / DSM 3382 / VKM B-1955 / HRM2) (Desulfobacterium autotrophicum).